Consider the following 391-residue polypeptide: Ethanol acetyltransferase 1 (391 aa).

Residues methionine 1 to valine 24 constitute a mitochondrion transit peptide. The 107-residue stretch at proline 48 to isoleucine 154 folds into the AB hydrolase-1 domain. Active-site charge relay system residues include serine 121, aspartate 145, and histidine 295.

This sequence belongs to the AB hydrolase superfamily.

Its subcellular location is the mitochondrion. The enzyme catalyses ethanol + acetyl-CoA = ethyl acetate + CoA. It carries out the reaction acetyl-CoA + H2O = acetate + CoA + H(+). The catalysed reaction is ethyl acetate + H2O = ethanol + acetate + H(+). With respect to regulation, by ethanol. Thioesterase and esterase reactions are highly repressed in the presence of high ethanol concentrations. Functionally, alcohol acetyltransferase that catalyzes the synthesis of ethyl acetate from ethanol and acetyl-CoA. Can also function as a thioesterase by hydrolyzing acetyl-CoA in the absence of ethanol, as well as esterase hydrolyzing ethyl acetate. In Wickerhamomyces anomalus (strain ATCC 58044 / CBS 1984 / NCYC 433 / NRRL Y-366-8) (Yeast), this protein is Ethanol acetyltransferase 1 (EAT1).